The sequence spans 372 residues: Heat-inducible transcription repressor HrcA (372 aa).

Residues 296–331 (VSSGYGRSGEAGEPAGNDPVGEPETESETESQTNDM) form a disordered region.

The protein belongs to the HrcA family.

Functionally, negative regulator of class I heat shock genes (grpE-dnaK-dnaJ and groELS operons). Prevents heat-shock induction of these operons. The protein is Heat-inducible transcription repressor HrcA of Bifidobacterium longum subsp. infantis (strain ATCC 15697 / DSM 20088 / JCM 1222 / NCTC 11817 / S12).